An 816-amino-acid chain; its full sequence is Sucrose synthase 2 (816 aa).

The GT-B glycosyltransferase stretch occupies residues 280–757 (MVLNVVILSP…GLQRIEEKYT (478 aa)).

This sequence belongs to the glycosyltransferase 1 family. Plant sucrose synthase subfamily. As to quaternary structure, forms homotetramers and heterotetramers with SS1, all three possible heterotetramers are formed. In terms of tissue distribution, abundant in developing endosperm, low in aleurone, and undetected in coleoptiles and roots. Also detected in crude extracts of anthers and in immature embryos.

It catalyses the reaction an NDP-alpha-D-glucose + D-fructose = a ribonucleoside 5'-diphosphate + sucrose + H(+). Sucrose-cleaving enzyme that provides UDP-glucose and fructose for various metabolic pathways. The protein is Sucrose synthase 2 (SS2) of Hordeum vulgare (Barley).